A 124-amino-acid chain; its full sequence is Membrane magnesium transporter 2 (124 aa).

A topological domain (cytoplasmic) is located at residue methionine 1. A helical transmembrane segment spans residues 2-22 (VAWLWKVLVGVGLSALAHAAF). Residues 23–44 (SAAQHRSHTRLAEMKYEPLPTD) are Lumenal-facing. The helical transmembrane segment at 45–65 (IVLQTLLAFALTCYGVVHTAG) threads the bilayer. At 66–124 (DFRDRDATSELKNVTFDTLRNRPSFYVFQHSGSSLLQPSDTTRSSNLNVPSSDDIRLKF) the chain is on the cytoplasmic side.

It belongs to the membrane magnesium transporter (TC 1.A.67) family.

Its subcellular location is the golgi apparatus membrane. The protein resides in the early endosome membrane. In terms of biological role, mediates Mg(2+) transport. This chain is Membrane magnesium transporter 2, found in Rattus norvegicus (Rat).